The chain runs to 533 residues: uncharacterized protein (533 aa).

Composition is skewed to polar residues over residues 30-43 (SQQG…VKNH), 79-91 (NAGT…THLS), 231-247 (NVKS…SSSA), and 254-263 (GRQSNSPNSN). Disordered regions lie at residues 30–92 (SQQG…HLSA) and 221–274 (SLSP…PGAS). Residue serine 336 is modified to Phosphoserine. Residues 475 to 510 (HPSLSNSAASPPVSSPGLRRSHIPVHEGLKHTRDGV) form a disordered region. The segment covering 476-490 (PSLSNSAASPPVSSP) has biased composition (low complexity). Residues 498–510 (PVHEGLKHTRDGV) show a composition bias toward basic and acidic residues.

The protein localises to the nucleus. This is an uncharacterized protein from Schizosaccharomyces pombe (strain 972 / ATCC 24843) (Fission yeast).